The following is a 367-amino-acid chain: tRNA/tmRNA (uracil-C(5))-methyltransferase (367 aa).

S-adenosyl-L-methionine contacts are provided by Q190, Y218, N223, E239, and D299. The active-site Nucleophile is C324. E358 acts as the Proton acceptor in catalysis.

This sequence belongs to the class I-like SAM-binding methyltransferase superfamily. RNA M5U methyltransferase family. TrmA subfamily.

The enzyme catalyses uridine(54) in tRNA + S-adenosyl-L-methionine = 5-methyluridine(54) in tRNA + S-adenosyl-L-homocysteine + H(+). It catalyses the reaction uridine(341) in tmRNA + S-adenosyl-L-methionine = 5-methyluridine(341) in tmRNA + S-adenosyl-L-homocysteine + H(+). Dual-specificity methyltransferase that catalyzes the formation of 5-methyluridine at position 54 (m5U54) in all tRNAs, and that of position 341 (m5U341) in tmRNA (transfer-mRNA). The chain is tRNA/tmRNA (uracil-C(5))-methyltransferase from Pectobacterium carotovorum subsp. carotovorum (strain PC1).